Here is a 437-residue protein sequence, read N- to C-terminus: ATP-dependent protease ATPase subunit HslU (437 aa).

ATP contacts are provided by residues Val18, 60 to 65 (GVGKTE), Asp249, Glu315, and Arg387.

This sequence belongs to the ClpX chaperone family. HslU subfamily. A double ring-shaped homohexamer of HslV is capped on each side by a ring-shaped HslU homohexamer. The assembly of the HslU/HslV complex is dependent on binding of ATP.

The protein resides in the cytoplasm. In terms of biological role, ATPase subunit of a proteasome-like degradation complex; this subunit has chaperone activity. The binding of ATP and its subsequent hydrolysis by HslU are essential for unfolding of protein substrates subsequently hydrolyzed by HslV. HslU recognizes the N-terminal part of its protein substrates and unfolds these before they are guided to HslV for hydrolysis. This Rhodospirillum centenum (strain ATCC 51521 / SW) protein is ATP-dependent protease ATPase subunit HslU.